The following is a 444-amino-acid chain: Structure-specific endonuclease subunit SLX1 (444 aa).

In terms of domain architecture, GIY-YIG spans 23–105 (AFYCCYLLRS…QNTKVSRHAD (83 aa)). An SLX1-type zinc finger spans residues 240-295 (CGVCKQRLILQHDIIAVCSHSSCHCAAHLSCLSSHFLKDKDSDSELIPREGTCPAC). Disordered regions lie at residues 323 to 355 (RRRR…DALQ) and 386 to 444 (AHRP…EVIE).

The protein belongs to the SLX1 family. As to quaternary structure, forms a heterodimer with SLX4. It depends on a divalent metal cation as a cofactor.

It is found in the nucleus. Its function is as follows. Catalytic subunit of the SLX1-SLX4 structure-specific endonuclease that resolves DNA secondary structures generated during DNA repair and recombination. Has endonuclease activity towards branched DNA substrates, introducing single-strand cuts in duplex DNA close to junctions with ss-DNA. The protein is Structure-specific endonuclease subunit SLX1 of Paracoccidioides brasiliensis (strain Pb18).